Here is a 275-residue protein sequence, read N- to C-terminus: Lycopene elongase/hydratase (275 aa).

A run of 9 helical transmembrane segments spans residues 13-33 (FWLY…TTVG), 38-58 (APAV…LYGI), 84-104 (AAVA…AAPL), 107-127 (EAWP…APPL), 134-154 (VLDS…YAGV), 160-180 (PLLA…FSAI), 203-223 (ALAY…LVDV), 225-245 (FGLL…LQVA), and 253-273 (YPAV…WGVV).

It belongs to the UbiA prenyltransferase family.

It localises to the cell membrane. It catalyses the reaction all-trans-lycopene + dimethylallyl diphosphate + H2O = dihydroisopentenyldehydrorhodopin + diphosphate. The catalysed reaction is isopentenyldehydrorhodopin + dimethylallyl diphosphate + H2O = dihydrobisanhydrobacterioruberin + diphosphate. Its pathway is carotenoid biosynthesis. With respect to regulation, inhibited by bacterioopsin. Involved in the biosynthesis of the acyclic C50 carotenoid bacterioruberin (BR). Acts as a bifunctional elongase/hydratase that catalyzes the elongation of lycopene by attaching a C(5) isoprene unit at C-2, as well as the hydroxylation of the previous end of the molecule. The enzyme acts at both ends of the substrate, and catalyzes the conversion of lycopene to the C(45) intermediate dihydroisopentenyldehydrorhodopin (DH-IDR) and the conversion of isopentenyldehydrorhodopin (IDR) to the C(50) carotenoid dihydrobisanhydrobacterioruberin (DH-BABR). Can also catalyze the conversion of lycopene to tetrahydrobisanhydrobacterioruberin (TH-BABR). The chain is Lycopene elongase/hydratase from Halobacterium salinarum (strain ATCC 700922 / JCM 11081 / NRC-1) (Halobacterium halobium).